Here is a 157-residue protein sequence, read N- to C-terminus: Endoribonuclease YbeY (157 aa).

The Zn(2+) site is built by His-122, His-126, and His-132.

It belongs to the endoribonuclease YbeY family. Zn(2+) serves as cofactor.

The protein localises to the cytoplasm. Single strand-specific metallo-endoribonuclease involved in late-stage 70S ribosome quality control and in maturation of the 3' terminus of the 16S rRNA. This chain is Endoribonuclease YbeY, found in Bacillus subtilis (strain 168).